We begin with the raw amino-acid sequence, 161 residues long: Large ribosomal subunit protein uL10 (161 aa).

It belongs to the universal ribosomal protein uL10 family. Part of the ribosomal stalk of the 50S ribosomal subunit. The N-terminus interacts with L11 and the large rRNA to form the base of the stalk. The C-terminus forms an elongated spine to which L12 dimers bind in a sequential fashion forming a multimeric L10(L12)X complex.

In terms of biological role, forms part of the ribosomal stalk, playing a central role in the interaction of the ribosome with GTP-bound translation factors. The polypeptide is Large ribosomal subunit protein uL10 (Sulfurovum sp. (strain NBC37-1)).